An 847-amino-acid chain; its full sequence is Receptor-like protein 12 (847 aa).

Residues 1–27 form the signal peptide; it reads MMIRSHRHWVFSSRIIIFLSLLVHSLA. Residues 28–798 are Extracellular-facing; sequence SSSPHFCRDD…LSEAEENMFN (771 aa). N-linked (GlcNAc...) asparagine glycans are attached at residues N52, N66, N103, and N132. LRR repeat units lie at residues 109 to 133, 135 to 157, 158 to 181, 183 to 205, 206 to 229, 231 to 253, 254 to 277, 279 to 301, 302 to 325, 326 to 350, 351 to 374, 375 to 398, 400 to 422, 424 to 442, 443 to 466, 467 to 491, 492 to 514, 516 to 539, 541 to 562, 563 to 587, 589 to 613, 657 to 681, 682 to 704, 705 to 729, and 731 to 754; these read LQYLRHLDLTNCNLYGEIPSSLGNL, HLTLVNLYFNKFVGEIPASIGNL, NQLRHLILANNVLTGEIPSSLGNL, RLVNLELFSNRLVGKIPDSIGDL, KQLRNLSLASNNLIGEIPSSLGNL, NLVHLVLTHNQLVGEVPASIGNL, IELRVMSFENNSLSGNIPISFANL, KLSIFVLSSNNFTSTFPFDMSIF, HNLEYFDVSYNSFSGPFPKSLLLI, PSLESIYLQENQFTGPIEFANTSSS, TKLQDLILGRNRLHGPIPESISRL, LNLEELDISHNNFTGAIPPTISKL, NLLHLDLSKNNLEGEVPACLWRL, TMVLSHNSFSSFENTSQEE, ALIEELDLNSNSFQGPIPYMICKL, SSLGFLDLSNNLFSGSIPSCIRNFS, GSIKELNLGDNNFSGTLPDIFSK, TELVSLDVSHNQLEGKFPKSLINC, ALELVNVESNKIKDIFPSWLES, LPSLHVLNLRSNKFYGPLYHRHASI, FQSLRIIDISHNNFSGTLPPYYFSN, RRDFRAIDFSGNKINGNIPESLGYL, KELRVLNLSGNAFTSVIPRFLAN, LTKLETLDISRNKLSGQIPQDLAAL, and FLSYMNFSHNLLQGPVPRGTQFQR. N-linked (GlcNAc...) asparagine glycosylation is present at N180. N-linked (GlcNAc...) asparagine glycosylation is found at N210 and N228. N-linked (GlcNAc...) asparagine glycosylation is found at N263, N276, and N289. N-linked (GlcNAc...) asparagine glycosylation occurs at N346. N-linked (GlcNAc...) asparagine glycosylation is present at N386. N437 carries an N-linked (GlcNAc...) asparagine glycan. Residues N489 and N503 are each glycosylated (N-linked (GlcNAc...) asparagine). The N-linked (GlcNAc...) asparagine glycan is linked to N601. Residues N688 and N704 are each glycosylated (N-linked (GlcNAc...) asparagine). The N-linked (GlcNAc...) asparagine glycan is linked to N736. Residues 799 to 819 traverse the membrane as a helical segment; that stretch reads WVAAAIAYGPGVLCGLVIGHF. The Cytoplasmic portion of the chain corresponds to 820–847; it reads YTSHNHEWFTEKFGRKQHKALTSVKCSL.

This sequence belongs to the RLP family.

It is found in the cell membrane. Functionally, involved in the perception of CLV3 and CLV3-like peptides, that act as extracellular signals regulating meristems maintenance. The polypeptide is Receptor-like protein 12 (Arabidopsis thaliana (Mouse-ear cress)).